A 282-amino-acid chain; its full sequence is MPELPEVEVVRRGLAAHVTGRTISAVRVHHPRAVRRHEAGPADLTARLLDSVITGTGRRGKYLWLTLGDGSAVVVHLGMSGQMLLGPVRNENHLRIAVLLDDGTALSFVDQRTFGGWMLADLVTVDGSDVPAPVAHIARDPLDPLFDRAAVVNVLRRKHSEIKRQLLDQTVVSGIGNIYADESLWRAKINGARLASGVSKAKLAELLDAATDVMTDALAQGGTSFDSLYVNVNGESGYFDRSLDAYGREGEPCRRCGAIMRRDKFMNRSSFYCPRCQPRPRV.

Catalysis depends on P2, which acts as the Schiff-base intermediate with DNA. Residue E3 is the Proton donor of the active site. The active-site Proton donor; for beta-elimination activity is K61. H93, R112, and K158 together coordinate DNA. Residues 244–278 (DAYGREGEPCRRCGAIMRRDKFMNRSSFYCPRCQP) form an FPG-type zinc finger. R268 (proton donor; for delta-elimination activity) is an active-site residue.

This sequence belongs to the FPG family. Monomer. Zn(2+) serves as cofactor.

It carries out the reaction Hydrolysis of DNA containing ring-opened 7-methylguanine residues, releasing 2,6-diamino-4-hydroxy-5-(N-methyl)formamidopyrimidine.. It catalyses the reaction 2'-deoxyribonucleotide-(2'-deoxyribose 5'-phosphate)-2'-deoxyribonucleotide-DNA = a 3'-end 2'-deoxyribonucleotide-(2,3-dehydro-2,3-deoxyribose 5'-phosphate)-DNA + a 5'-end 5'-phospho-2'-deoxyribonucleoside-DNA + H(+). Involved in base excision repair of DNA damaged by oxidation or by mutagenic agents. Acts as a DNA glycosylase that recognizes and removes damaged bases. Has a preference for oxidized purines, such as 7,8-dihydro-8-oxoguanine (8-oxoG). Has AP (apurinic/apyrimidinic) lyase activity and introduces nicks in the DNA strand. Cleaves the DNA backbone by beta-delta elimination to generate a single-strand break at the site of the removed base with both 3'- and 5'-phosphates. The sequence is that of Formamidopyrimidine-DNA glycosylase from Mycolicibacterium gilvum (strain PYR-GCK) (Mycobacterium gilvum (strain PYR-GCK)).